The following is a 127-amino-acid chain: Small ribosomal subunit protein uS13 (127 aa).

Over residues 96-118 (LPVRGQRTHTNARTRKGPKRGIV) the composition is skewed to basic residues. Residues 96-127 (LPVRGQRTHTNARTRKGPKRGIVRAKPAAPAR) form a disordered region.

Belongs to the universal ribosomal protein uS13 family. As to quaternary structure, part of the 30S ribosomal subunit. Forms a loose heterodimer with protein S19. Forms two bridges to the 50S subunit in the 70S ribosome.

Located at the top of the head of the 30S subunit, it contacts several helices of the 16S rRNA. In the 70S ribosome it contacts the 23S rRNA (bridge B1a) and protein L5 of the 50S subunit (bridge B1b), connecting the 2 subunits; these bridges are implicated in subunit movement. Contacts the tRNAs in the A and P-sites. The chain is Small ribosomal subunit protein uS13 from Myxococcus xanthus (strain DK1622).